The primary structure comprises 105 residues: Co-chaperonin GroES (105 aa).

This sequence belongs to the GroES chaperonin family. In terms of assembly, heptamer of 7 subunits arranged in a ring. Interacts with the chaperonin GroEL.

The protein localises to the cytoplasm. Functionally, together with the chaperonin GroEL, plays an essential role in assisting protein folding. The GroEL-GroES system forms a nano-cage that allows encapsulation of the non-native substrate proteins and provides a physical environment optimized to promote and accelerate protein folding. GroES binds to the apical surface of the GroEL ring, thereby capping the opening of the GroEL channel. In Parvibaculum lavamentivorans (strain DS-1 / DSM 13023 / NCIMB 13966), this protein is Co-chaperonin GroES.